A 716-amino-acid chain; its full sequence is Penicillin-binding protein 2A (716 aa).

Residues 22–42 (LNILFLAAFVIFTWIIVELGI) form a helical membrane-spanning segment. The active-site Acyl-ester intermediate is Ser-397. The span at 689–706 (SKQDKEGTQQKNKDKIEE) shows a compositional bias: basic and acidic residues. The segment at 689-716 (SKQDKEGTQQKNKDKIEENAENTTSSDN) is disordered.

Belongs to the transpeptidase family.

It localises to the cell membrane. The protein localises to the forespore inner membrane. The enzyme catalyses Preferential cleavage: (Ac)2-L-Lys-D-Ala-|-D-Ala. Also transpeptidation of peptidyl-alanyl moieties that are N-acyl substituents of D-alanine.. It functions in the pathway cell wall biogenesis; peptidoglycan biosynthesis. In terms of biological role, involved in the synthesis of peptidoglycan associated with cell wall elongation, especially following spore germination. Has a partially redundant function with PBP 1 (ponA) or PBP 4 (pbpD) during spore outgrowth. Plays a redundant role with PbpH in determining the rod shape of the cell during vegetative growth and spore outgrowth. This Bacillus subtilis (strain 168) protein is Penicillin-binding protein 2A.